We begin with the raw amino-acid sequence, 318 residues long: Pantothenate kinase (318 aa).

Residue 96–103 coordinates ATP; it reads GSVAVGKS.

This sequence belongs to the prokaryotic pantothenate kinase family.

The protein localises to the cytoplasm. It carries out the reaction (R)-pantothenate + ATP = (R)-4'-phosphopantothenate + ADP + H(+). The protein operates within cofactor biosynthesis; coenzyme A biosynthesis; CoA from (R)-pantothenate: step 1/5. This Rhodopseudomonas palustris (strain BisB5) protein is Pantothenate kinase.